We begin with the raw amino-acid sequence, 110 residues long: Integration host factor subunit alpha (110 aa).

This sequence belongs to the bacterial histone-like protein family. As to quaternary structure, heterodimer of an alpha and a beta chain.

This protein is one of the two subunits of integration host factor, a specific DNA-binding protein that functions in genetic recombination as well as in transcriptional and translational control. The polypeptide is Integration host factor subunit alpha (Bdellovibrio bacteriovorus (strain ATCC 15356 / DSM 50701 / NCIMB 9529 / HD100)).